Reading from the N-terminus, the 779-residue chain is Acyl-homoserine lactone acylase PvdQ (779 aa).

The N-terminal stretch at 1–25 is a signal peptide; the sequence is MIISRPLCSFVFAGLSFAVILPAQA. Residues 202-223 constitute a propeptide, spacer peptide; it reads AQQAQALQLAAARNQRFALERG. Serine 224 functions as the Nucleophile in the catalytic mechanism. Polar residues predominate over residues 731–746; that stretch reads ESSNPQSAHSSDQTEA. The segment at 731–750 is disordered; that stretch reads ESSNPQSAHSSDQTEAFSKK.

Belongs to the peptidase S45 family. As to quaternary structure, heterodimer of an alpha subunit and a beta subunit processed from the same precursor.

Its subcellular location is the periplasm. It catalyses the reaction an N-acyl-L-homoserine lactone + H2O = L-homoserine lactone + a carboxylate. Its function is as follows. Catalyzes the deacylation of acyl-homoserine lactone (AHL or acyl-HSL), releasing homoserine lactone (HSL) and the corresponding fatty acid. Possesses a specificity for the degradation of long-chain acyl-HSLs (side chains of 11 to 14 carbons in length). The protein is Acyl-homoserine lactone acylase PvdQ (pvdQ) of Pseudomonas syringae pv. syringae (strain B728a).